The primary structure comprises 301 residues: Putative dynamin-related protein 4A (301 aa).

The Dynamin-type G domain occupies 59–301 (GIQLPTIVVV…LIDGDIVGIL (243 aa)). The segment at 69–76 (GDQSSGKS) is G1 motif. 69-76 (GDQSSGKS) contacts GTP. The G2 motif stretch occupies residues 94 to 96 (CTR). Positions 168–171 (DLPG) are G3 motif. GTP-binding positions include 168-172 (DLPGI) and 237-240 (TKAD). Positions 237-240 (TKAD) are G4 motif. E270 is a region of interest (G5 motif).

Belongs to the TRAFAC class dynamin-like GTPase superfamily. Dynamin/Fzo/YdjA family.

This Arabidopsis thaliana (Mouse-ear cress) protein is Putative dynamin-related protein 4A (DRP4A).